Consider the following 246-residue polypeptide: Sensory transduction protein LytT (246 aa).

A Response regulatory domain is found at 3 to 117 (KVLVVDDEML…RIVQTLKKYK (115 aa)). 4-aspartylphosphate is present on Asp-54. The 105-residue stretch at 142–246 (LALPIEESIV…AKELKKLLRI (105 aa)) folds into the HTH LytTR-type domain.

Post-translationally, phosphorylated by LytS.

Its subcellular location is the cytoplasm. Functionally, member of the two-component regulatory system LytS/LytT that probably regulates genes involved in cell wall metabolism. In Bacillus anthracis, this protein is Sensory transduction protein LytT (lytT).